The primary structure comprises 147 residues: Putative acetyltransferase BSU40680 (147 aa).

The N-acetyltransferase domain maps to 1 to 144 (MNVKKITSEQ…PHVLMTKQDD (144 aa)). CoA contacts are provided by residues 74–76 (ICI) and 115–117 (GFY).

It belongs to the UPF0039 (ElaA) family.

In terms of biological role, could catalyze the transfer of an acetyl group from acetyl coenzyme A (AcCoA) to an acceptor substrate and release both CoA and the acetylated product. The chain is Putative acetyltransferase BSU40680 (yybD) from Bacillus subtilis (strain 168).